We begin with the raw amino-acid sequence, 220 residues long: Dual specificity phosphatase 29 (220 aa).

Over residues 1–15 (MTSGEVKTSLKNAYS) the composition is skewed to polar residues. Residues 1-29 (MTSGEVKTSLKNAYSSAKRLSPKMEEEGE) are disordered. In terms of domain architecture, Tyrosine-protein phosphatase spans 54–202 (HVNEVWPKLY…LRELDKQLVQ (149 aa)). 146-153 (HCVMGRSR) contributes to the substrate binding site. Residue Cys147 is the Phosphocysteine intermediate of the active site.

The protein belongs to the protein-tyrosine phosphatase family. Non-receptor class dual specificity subfamily. In terms of assembly, homodimer. Interacts with PRKAA2.

Its subcellular location is the cytoplasm. It localises to the nucleus. It carries out the reaction O-phospho-L-tyrosyl-[protein] + H2O = L-tyrosyl-[protein] + phosphate. It catalyses the reaction O-phospho-L-seryl-[protein] + H2O = L-seryl-[protein] + phosphate. The catalysed reaction is O-phospho-L-threonyl-[protein] + H2O = L-threonyl-[protein] + phosphate. Functionally, dual specificity phosphatase able to dephosphorylate phosphotyrosine, phosphoserine and phosphothreonine residues within the same substrate, with a preference for phosphotyrosine as a substrate. Involved in the modulation of intracellular signaling cascades. In skeletal muscle regulates systemic glucose homeostasis by activating, AMPK, an energy sensor protein kinase. Affects MAP kinase signaling though modulation of the MAPK1/2 cascade in skeletal muscle promoting muscle cell differentiation, development and atrophy. The chain is Dual specificity phosphatase 29 from Homo sapiens (Human).